A 210-amino-acid chain; its full sequence is MSQQYTLPPLPYPYDALQPYISQQIMELHHKKHHQTYVNGLNAALEAQKKAAEANDVPKLVSVQQAIKFNGGGHINHSLFWKNLAPEKSGGGKIDQAPVLKAAIEQRWGSFDKFKDAFNTTLLGIQGSGWGWLVTDGPKGKLDITTTHDQDPVTGAAPVFGVDMWEHAYYLQYLNDKASYAKGIWNVINWAEAENRYIAGDKGGHPFMKL.

Histidine 29, histidine 77, aspartate 163, and histidine 167 together coordinate Mn(2+).

The protein belongs to the iron/manganese superoxide dismutase family. In terms of assembly, homotetramer. The cofactor is Mn(2+).

It localises to the mitochondrion matrix. The catalysed reaction is 2 superoxide + 2 H(+) = H2O2 + O2. Destroys superoxide anion radicals which are normally produced within the cells and which are toxic to biological systems. In Aspergillus fumigatus (strain ATCC MYA-4609 / CBS 101355 / FGSC A1100 / Af293) (Neosartorya fumigata), this protein is Superoxide dismutase [Mn], mitochondrial (sodB).